The chain runs to 190 residues: MADTSSPSFLQLALARQTVLAGGVIAYPTEAVWGLGCDPWNREAVEYILELKQRPMEKGVILVAASVEQVRFLLDPLPDAVQSEALRHWPGPVTCLLPDVNQQVPEWVRGKHSSIAVRVSDHPVVRALCEATGMPLVSTSCNPAGRQPARAIWQVRRYFGDRIDRIVPGALGGNRKPSRIIDIVTGQQFR.

Positions 9–190 (FLQLALARQT…IDIVTGQQFR (182 aa)) constitute a YrdC-like domain.

It belongs to the SUA5 family. TsaC subfamily.

It is found in the cytoplasm. The enzyme catalyses L-threonine + hydrogencarbonate + ATP = L-threonylcarbamoyladenylate + diphosphate + H2O. Required for the formation of a threonylcarbamoyl group on adenosine at position 37 (t(6)A37) in tRNAs that read codons beginning with adenine. Catalyzes the conversion of L-threonine, HCO(3)(-)/CO(2) and ATP to give threonylcarbamoyl-AMP (TC-AMP) as the acyladenylate intermediate, with the release of diphosphate. This chain is Threonylcarbamoyl-AMP synthase, found in Marinobacter nauticus (strain ATCC 700491 / DSM 11845 / VT8) (Marinobacter aquaeolei).